The following is a 920-amino-acid chain: Androgen receptor (920 aa).

Positions 1-559 (MEVQLGLGRV…IDYYFPPQKT (559 aa)) are modulating. An interaction with ZNF318 region spans residues 1–587 (MEVQLGLGRV…GSCKVFFKRA (587 aa)). 2 disordered regions span residues 36-167 (NPGP…LSLL) and 195-228 (QQQQ…YLGG). Over residues 44-91 (AASAAPPGASLLLLQQQQQQQQQQQQQQQQQQQQQQQETSPRQQQQQQ) the composition is skewed to low complexity. Residue serine 83 is modified to Phosphoserine; by CDK9. Residue serine 96 is modified to Phosphoserine. Over residues 195-217 (QQQQQEAVSEGSSSGRAREASGA) the composition is skewed to low complexity. Positions 218–228 (PTSSKDNYLGG) are enriched in polar residues. Tyrosine 225 is modified (phosphotyrosine; by CSK). Serine 258 is modified (phosphoserine). Tyrosine 269 carries the phosphotyrosine; by CSK and TNK2 modification. Residues tyrosine 309, tyrosine 348, tyrosine 359, and tyrosine 364 each carry the phosphotyrosine; by CSK modification. Tyrosine 365 carries the post-translational modification Phosphotyrosine; by CSK and TNK2. Lysine 388 is covalently cross-linked (Glycyl lysine isopeptide (Lys-Gly) (interchain with G-Cter in SUMO)). A Phosphotyrosine; by CSK modification is found at tyrosine 395. Lysine 521 is covalently cross-linked (Glycyl lysine isopeptide (Lys-Gly) (interchain with G-Cter in SUMO)). Tyrosine 535 and tyrosine 552 each carry phosphotyrosine; by CSK. The interval 552 to 919 (YYFPPQKTCL…GKVKPIYFHT (368 aa)) is interaction with LPXN. 2 consecutive NR C4-type zinc fingers follow at residues 560-580 (CLIC…CGSC) and 596-620 (CASR…LRKC). Positions 560 to 632 (CLICGDEASG…AGMTLGARKL (73 aa)) form a DNA-binding region, nuclear receptor. Residues 572-662 (YGALTCGSCK…TEETTQKLTV (91 aa)) form an interaction with HIPK3 region. The tract at residues 592–919 (QKYLCASRND…GKVKPIYFHT (328 aa)) is interaction with CCAR1. An interaction with KAT7 region spans residues 625 to 919 (MTLGARKLKK…GKVKPIYFHT (295 aa)). The residue at position 651 (serine 651) is a Phosphoserine; by STK4/MST1. Residues 669–900 (ECQPIFLNVL…DFPEMMAEII (232 aa)) enclose the NR LBD domain. 17beta-hydroxy-5alpha-androstan-3-one contacts are provided by asparagine 706 and arginine 753. Glycyl lysine isopeptide (Lys-Gly) (interchain with G-Cter in ubiquitin) cross-links involve residues lysine 846 and lysine 848. A 17beta-hydroxy-5alpha-androstan-3-one-binding site is contributed by threonine 878. Tyrosine 916 carries the phosphotyrosine; by CSK modification.

This sequence belongs to the nuclear hormone receptor family. NR3 subfamily. As to quaternary structure, binds DNA as a homodimer. Part of a ternary complex containing AR, EFCAB6/DJBP and PARK7. Interacts with HIPK3 and NR0B2 in the presence of androgen. The ligand binding domain interacts with KAT7/HBO1 in the presence of dihydrotestosterone. Interacts with EFCAB6/DJBP, PQBP1, RANBP9, RBAK, SPDEF, SRA1, TGFB1I1 and RREB1. Interacts with ZMIZ1/ZIMP10 and ZMIZ2/ZMIP7 which both enhance its transactivation activity. Interacts with SLC30A9 and RAD54L2/ARIP4. Interacts with MACROD1 (via macro domain). Interacts via the ligand-binding domain with LXXLL and FXXLF motifs from NCOA1, NCOA2, NCOA3 and MAGEA11. Interacts (via nuclear receptor DNA binding domain and nuclear receptor ligand binding domain) with NCOA4. The AR N-terminal poly-Gln region binds Ran resulting in enhancement of AR-mediated transactivation. Ran-binding decreases as the poly-Gln length increases. Interacts with HIP1 (via coiled coil domain). Interacts (via ligand-binding domain) with TRIM68. Interacts with TNK2. Interacts with USP26. Interacts with RNF6. Interacts (regulated by RNF6 probably through polyubiquitination) with RNF14; regulates AR transcriptional activity. Interacts with PRMT2 and TRIM24. Interacts with RACK1. Interacts with RANBP10; this interaction enhances dihydrotestosterone-induced AR transcriptional activity. Interacts with PRPF6 in a hormone-independent way; this interaction enhances dihydrotestosterone-induced AR transcriptional activity. Interacts with STK4/MST1. Interacts with ZIPK/DAPK3. Interacts with LPXN. Interacts with MAK. Part of a complex containing AR, MAK and NCOA3. Interacts with CRY1. Interacts with CCAR1 and GATA2. Interacts with ZNF318. Interacts with BUD31. Interacts with ARID4A. Interacts with ARID4B. Interacts (via NR LBD domain) with ZBTB7A; the interaction is direct and androgen-dependent. Interacts with NCOR1. Interacts with NCOR2. Interacts with CRY2 in a ligand-dependent manner. Sumoylated on Lys-388 (major) and Lys-521. Ubiquitinated. Deubiquitinated by USP26. 'Lys-6' and 'Lys-27'-linked polyubiquitination by RNF6 modulates AR transcriptional activity and specificity. Post-translationally, phosphorylated in prostate cancer cells in response to several growth factors including EGF. Phosphorylation is induced by c-Src kinase (CSK). Tyr-535 is one of the major phosphorylation sites and an increase in phosphorylation and Src kinase activity is associated with prostate cancer progression. Phosphorylation by TNK2 enhances the DNA-binding and transcriptional activity and may be responsible for androgen-independent progression of prostate cancer. Phosphorylation at Ser-83 by CDK9 regulates AR promoter selectivity and cell growth. Phosphorylation by PAK6 leads to AR-mediated transcription inhibition. In terms of processing, palmitoylated by ZDHHC7 and ZDHHC21. Palmitoylation is required for plasma membrane targeting and for rapid intracellular signaling via ERK and AKT kinases and cAMP generation. In terms of tissue distribution, mainly expressed in heart and skeletal muscle. As to expression, expressed in basal and stromal cells of the prostate (at protein level).

It localises to the nucleus. It is found in the cytoplasm. With respect to regulation, AIM-100 (4-amino-5,6-biaryl-furo[2,3-d]pyrimidine) suppresses TNK2-mediated phosphorylation at Tyr-269. Inhibits the binding of the Tyr-269 phosphorylated form to androgen-responsive enhancers (AREs) and its transcriptional activity. Its function is as follows. Steroid hormone receptors are ligand-activated transcription factors that regulate eukaryotic gene expression and affect cellular proliferation and differentiation in target tissues. Transcription factor activity is modulated by bound coactivator and corepressor proteins like ZBTB7A that recruits NCOR1 and NCOR2 to the androgen response elements/ARE on target genes, negatively regulating androgen receptor signaling and androgen-induced cell proliferation. Transcription activation is also down-regulated by NR0B2. Activated, but not phosphorylated, by HIPK3 and ZIPK/DAPK3. Functionally, lacks the C-terminal ligand-binding domain and may therefore constitutively activate the transcription of a specific set of genes independently of steroid hormones. The protein is Androgen receptor (AR) of Homo sapiens (Human).